The sequence spans 324 residues: Fructose-1,6-bisphosphatase class 1 (324 aa).

Residues Glu88, Asp107, Leu109, and Asp110 each coordinate Mg(2+). Substrate is bound by residues 110–113 (DGSS), Asn199, and Lys265. Residue Glu271 participates in Mg(2+) binding.

The protein belongs to the FBPase class 1 family. In terms of assembly, homotetramer. The cofactor is Mg(2+).

The protein localises to the cytoplasm. The catalysed reaction is beta-D-fructose 1,6-bisphosphate + H2O = beta-D-fructose 6-phosphate + phosphate. It participates in carbohydrate biosynthesis; gluconeogenesis. This chain is Fructose-1,6-bisphosphatase class 1, found in Neisseria meningitidis serogroup C (strain 053442).